Reading from the N-terminus, the 74-residue chain is Cecropin-P4 (74 aa).

Positions 1–13 (MFLMYLLVQTTES) are cleaved as a signal peptide. Residues 45–74 (HRRSVAHQEEASLHVKTDELPSPDTVREQL) constitute a propeptide, removed in mature form. The segment at 51–74 (HQEEASLHVKTDELPSPDTVREQL) is disordered.

It belongs to the cecropin family. In terms of tissue distribution, expressed in the body wall, intestine, uterus and ovary.

It localises to the secreted. Its function is as follows. Has antibacterial activity against several Gram-positive and Gram-negative bacteria. Is weakly active against yeasts. Acts by a nonpore mechanism. The protein is Cecropin-P4 (ASCEC-4) of Ascaris suum (Pig roundworm).